We begin with the raw amino-acid sequence, 635 residues long: Probable retaining alpha-galactosidase (635 aa).

The N-terminal stretch at 1–30 (MARSVRRTTLALLLSAVLAMTLFVTAPAHA) is a signal peptide. Asp-179 contacts Ca(2+). The Nucleophile role is filled by Asp-397. Ca(2+)-binding residues include Glu-446 and Glu-452. The active-site Proton donor/acceptor is the Glu-452.

Belongs to the glycosyl hydrolase 97 family. Ca(2+) is required as a cofactor.

It carries out the reaction Hydrolysis of terminal, non-reducing alpha-D-galactose residues in alpha-D-galactosides, including galactose oligosaccharides, galactomannans and galactolipids.. In Streptomyces bingchenggensis (strain BCW-1), this protein is Probable retaining alpha-galactosidase.